Here is a 616-residue protein sequence, read N- to C-terminus: Formin-binding protein 1 (616 aa).

The interval 1-79 (MSWGTELWDQ…CKAFLSTLNE (79 aa)) is required for self-association and induction of membrane tubulation. The region spanning 1 to 264 (MSWGTELWDQ…AAESIDQKND (264 aa)) is the F-BAR domain. The segment at 1-334 (MSWGTELWDQ…KKNKLMSLLT (334 aa)) is interaction with microtubules. 2 positions are modified to N6-acetyllysine: Lys-66 and Lys-110. A coiled-coil region spans residues 67–259 (YTACKAFLST…DGIVKAAESI (193 aa)). The segment at 251 to 616 (GIVKAAESID…VYLDKNAKGS (366 aa)) is required for self-association and induction of membrane tubulation. 2 disordered regions span residues 280 to 314 (GDIEFEDYTQPMKRTVSDNSLSSSKEGKPELRFGG) and 332 to 366 (LLTSPHQPPPPPPASASPSAVPNGPQSPKQPKEPL). Phosphoserine occurs at positions 296 and 299. A compositionally biased stretch (pro residues) spans 337 to 346 (HQPPPPPPAS). Phosphoserine is present on residues Ser-348 and Ser-358. Residues 398-490 (PEDFSNFPPE…VEGRLPARSE (93 aa)) adopt a coiled-coil conformation. An interaction with RND2 region spans residues 399 to 551 (EDFSNFPPEQ…FDDEEPLPAI (153 aa)). An REM-1 domain is found at 403 to 480 (NFPPEQRRKK…AQKFEAWLAE (78 aa)). Residues 487-531 (ARSEQARRQSGLYDGQTHQTVTNCAQDRESPDGSYTEEQSQESEH) form a disordered region. Residues 494–616 (RQSGLYDGQT…VYLDKNAKGS (123 aa)) form an interaction with PDE6G region. Position 496 is a phosphoserine (Ser-496). Position 499 is a phosphotyrosine (Tyr-499). Residues 502-511 (QTHQTVTNCA) are compositionally biased toward polar residues. The tract at residues 513–616 (DRESPDGSYT…VYLDKNAKGS (104 aa)) is required for interaction with TNKS. Ser-520 carries the post-translational modification Phosphoserine. Residues 534–616 (LAPDFDDEFD…VYLDKNAKGS (83 aa)) form an interaction with DNM1 and DNM3 region. The 62-residue stretch at 549–610 (PAIGTCKALY…PTSYVEVYLD (62 aa)) folds into the SH3 domain. An interaction with ARHGAP17, DAAM1, DIAPH1 and DIAPH2 region spans residues 549 to 616 (PAIGTCKALY…VYLDKNAKGS (68 aa)). Residues 552–608 (GTCKALYTFEGQNEGTISVVEGETLSVIEEDKGDGWTRIRRNEDEEGYVPTSYVEVY) form an interaction with DNM2 and WASL region. The segment at 552–609 (GTCKALYTFEGQNEGTISVVEGETLSVIEEDKGDGWTRIRRNEDEEGYVPTSYVEVYL) is interaction with FASLG.

This sequence belongs to the FNBP1 family. In terms of assembly, homodimerizes, the dimers can polymerize end-to-end to form filamentous structures. Interacts specifically with GTP-bound RND2 and CDC42. Interacts with AKAP9, ARHGAP17, DAAM1, DIAPH1, DIAPH2, DNM1, DNM2, DNM3, FASLG/FASL, microtubules, PDE6G, SNX2 and WASL/N-WASP. May interact with TNKS. As to expression, expressed in brain and testis.

It localises to the cytoplasm. It is found in the cytoskeleton. The protein resides in the cell cortex. Its subcellular location is the lysosome. The protein localises to the cytoplasmic vesicle. It localises to the cell membrane. It is found in the membrane. The protein resides in the clathrin-coated pit. Required to coordinate membrane tubulation with reorganization of the actin cytoskeleton during the late stage of clathrin-mediated endocytosis. Binds to lipids such as phosphatidylinositol 4,5-bisphosphate and phosphatidylserine and promotes membrane invagination and the formation of tubules. Also enhances actin polymerization via the recruitment of WASL/N-WASP, which in turn activates the Arp2/3 complex. Actin polymerization may promote the fission of membrane tubules to form endocytic vesicles. May act as a link between RND2 signaling and regulation of the actin cytoskeleton. May be required for the lysosomal retention of FASLG/FASL. The chain is Formin-binding protein 1 (Fnbp1) from Mus musculus (Mouse).